The following is a 394-amino-acid chain: Methane monooxygenase component A beta chain (394 aa).

In terms of assembly, m.trichosporium has two forms of methane monooxygenase, a soluble and a membrane-bound type. The soluble type consists of four components (A to D): protein A, comprising three chains, in an alpha-2, beta-2, gamma-2 configuration, is a nonheme iron protein containing an unusual mu-hydroxo bridge structure at its active site and interacts with both oxygen and methane.

The catalysed reaction is methane + NADH + O2 + H(+) = methanol + NAD(+) + H2O. The enzyme catalyses methane + NADPH + O2 + H(+) = methanol + NADP(+) + H2O. Functionally, responsible for the initial oxygenation of methane to methanol in methanotrophs. It also catalyzes the monohydroxylation of a variety of unactivated alkenes, alicyclic, aromatic and heterocyclic compounds. In Methylosinus trichosporium, this protein is Methane monooxygenase component A beta chain (mmoY).